The sequence spans 46 residues: L-amino-acid oxidase (46 aa).

Asn31 is a glycosylation site (N-linked (GlcNAc...) asparagine).

Belongs to the flavin monoamine oxidase family. FIG1 subfamily. It depends on FAD as a cofactor.

It is found in the secreted. The protein resides in the lysosome. It localises to the cytoplasmic vesicle. The protein localises to the secretory vesicle. Its subcellular location is the acrosome. It carries out the reaction an L-alpha-amino acid + O2 + H2O = a 2-oxocarboxylate + H2O2 + NH4(+). The catalysed reaction is L-tryptophan + O2 + H2O = indole-3-pyruvate + H2O2 + NH4(+). The enzyme catalyses L-phenylalanine + O2 + H2O = 3-phenylpyruvate + H2O2 + NH4(+). It catalyses the reaction L-tyrosine + O2 + H2O = 3-(4-hydroxyphenyl)pyruvate + H2O2 + NH4(+). It carries out the reaction L-arginine + O2 + H2O = 5-guanidino-2-oxopentanoate + H2O2 + NH4(+). It participates in amino-acid degradation; L-tryptophan degradation via pyruvate pathway. Secreted L-amino-acid oxidase that acts as a key immunoregulator. Has preference for L-aromatic amino acids: converts phenylalanine (Phe), tyrosine (Tyr) and tryptophan (Trp) to phenylpyruvic acid (PP), hydroxyphenylpyruvic acid (HPP), and indole-3-pyruvic acid (I3P), respectively. Also has weak L-arginine oxidase activity. Acts as a negative regulator of anti-tumor immunity by mediating Trp degradation via an indole pyruvate pathway that activates the transcription factor AHR. IL4I1-mediated Trp catabolism generates I3P, giving rise to indole metabolites (indole-3-acetic acid (IAA) and indole-3-aldehyde (I3A)) and kynurenic acid, which act as ligands for AHR, a ligand-activated transcription factor that plays important roles in immunity and cancer. AHR activation by indoles following IL4I1-mediated Trp degradation enhances tumor progression by promoting cancer cell motility and suppressing adaptive immunity. Also has an immunoregulatory function in some immune cells, probably by mediating Trp degradation and promoting downstream AHR activation: inhibits T-cell activation and proliferation, promotes the differentiation of naive CD4(+) T-cells into FOXP3(+) regulatory T-cells (Treg) and regulates the development and function of B-cells. Also regulates M2 macrophage polarization by inhibiting T-cell activation. Also has antibacterial properties by inhibiting growth of Gram negative and Gram positive bacteria through the production of NH4(+) and H2O2. The sequence is that of L-amino-acid oxidase from Mus spretus (Western Mediterranean mouse).